A 439-amino-acid polypeptide reads, in one-letter code: tRNA modification GTPase MnmE (439 aa).

3 residues coordinate (6S)-5-formyl-5,6,7,8-tetrahydrofolate: Arg24, Glu81, and Lys121. One can recognise a TrmE-type G domain in the interval 218 to 363; that stretch reads GFKVVIAGAP…LRRLIGDIVE (146 aa). Asn228 provides a ligand contact to K(+). Residues 228–233, 247–253, and 272–275 contribute to the GTP site; these read NAGKSS, TEIAGTT, and DTAG. Ser232 serves as a coordination point for Mg(2+). K(+) contacts are provided by Thr247, Ile249, and Thr252. Thr253 provides a ligand contact to Mg(2+). Lys439 is a (6S)-5-formyl-5,6,7,8-tetrahydrofolate binding site.

Belongs to the TRAFAC class TrmE-Era-EngA-EngB-Septin-like GTPase superfamily. TrmE GTPase family. In terms of assembly, homodimer. Heterotetramer of two MnmE and two MnmG subunits. K(+) is required as a cofactor.

The protein localises to the cytoplasm. Functionally, exhibits a very high intrinsic GTPase hydrolysis rate. Involved in the addition of a carboxymethylaminomethyl (cmnm) group at the wobble position (U34) of certain tRNAs, forming tRNA-cmnm(5)s(2)U34. The protein is tRNA modification GTPase MnmE of Rhizobium johnstonii (strain DSM 114642 / LMG 32736 / 3841) (Rhizobium leguminosarum bv. viciae).